The following is a 281-amino-acid chain: Acetyl-coenzyme A carboxylase carboxyl transferase subunit beta (281 aa).

Residues 23–281 (LWSKCEDCGA…KTLAMMRVEG (259 aa)) form the CoA carboxyltransferase N-terminal domain. Positions 27, 30, 46, and 49 each coordinate Zn(2+). The segment at 27–49 (CEDCGAMLHRRQLEENLNTCNEC) adopts a C4-type zinc-finger fold.

The protein belongs to the AccD/PCCB family. As to quaternary structure, acetyl-CoA carboxylase is a heterohexamer composed of biotin carboxyl carrier protein (AccB), biotin carboxylase (AccC) and two subunits each of ACCase subunit alpha (AccA) and ACCase subunit beta (AccD). It depends on Zn(2+) as a cofactor.

The protein resides in the cytoplasm. It carries out the reaction N(6)-carboxybiotinyl-L-lysyl-[protein] + acetyl-CoA = N(6)-biotinyl-L-lysyl-[protein] + malonyl-CoA. It participates in lipid metabolism; malonyl-CoA biosynthesis; malonyl-CoA from acetyl-CoA: step 1/1. Its function is as follows. Component of the acetyl coenzyme A carboxylase (ACC) complex. Biotin carboxylase (BC) catalyzes the carboxylation of biotin on its carrier protein (BCCP) and then the CO(2) group is transferred by the transcarboxylase to acetyl-CoA to form malonyl-CoA. The chain is Acetyl-coenzyme A carboxylase carboxyl transferase subunit beta from Chlorobium luteolum (strain DSM 273 / BCRC 81028 / 2530) (Pelodictyon luteolum).